Reading from the N-terminus, the 584-residue chain is DNA mismatch repair protein MutL (584 aa).

Belongs to the DNA mismatch repair MutL/HexB family.

In terms of biological role, this protein is involved in the repair of mismatches in DNA. It is required for dam-dependent methyl-directed DNA mismatch repair. May act as a 'molecular matchmaker', a protein that promotes the formation of a stable complex between two or more DNA-binding proteins in an ATP-dependent manner without itself being part of a final effector complex. This Buchnera aphidicola subsp. Acyrthosiphon pisum (strain 5A) protein is DNA mismatch repair protein MutL.